The sequence spans 285 residues: V-type proton ATPase subunit D (285 aa).

Positions 208–226 (QKTKENAEKADSVTKEEHQ) are enriched in basic and acidic residues. Residues 208–285 (QKTKENAEKA…ENDSDEEVIF (78 aa)) form a disordered region. A Phosphoserine modification is found at Ser219. Residues 227–236 (GGSNTLQQTK) show a composition bias toward polar residues. Residues 248-263 (VGKEVINEVENSKDDT) show a composition bias toward basic and acidic residues. Positions 271-285 (TDDEEENDSDEEVIF) are enriched in acidic residues.

Belongs to the V-ATPase D subunit family. As to quaternary structure, V-ATPase is a heteromultimeric enzyme composed of a peripheral catalytic V1 complex (components A to H) attached to an integral membrane V0 proton pore complex (components: a, c, c', c'', d, e, f and VOA1).

Its subcellular location is the vacuole membrane. Its function is as follows. Subunit of the V1 complex of vacuolar(H+)-ATPase (V-ATPase), a multisubunit enzyme composed of a peripheral complex (V1) that hydrolyzes ATP and a membrane integral complex (V0) that translocates protons. V-ATPase is responsible for acidifying and maintaining the pH of intracellular compartments. In Schizosaccharomyces pombe (strain 972 / ATCC 24843) (Fission yeast), this protein is V-type proton ATPase subunit D (vma8).